A 416-amino-acid polypeptide reads, in one-letter code: Glutamyl-tRNA reductase (416 aa).

Residues 49–52 (TCNR), Ser-105, 110–112 (EPQ), and Gln-116 contribute to the substrate site. Residue Cys-50 is the Nucleophile of the active site. NADP(+) is bound at residue 185 to 190 (GAGETI).

Belongs to the glutamyl-tRNA reductase family. Homodimer.

The enzyme catalyses (S)-4-amino-5-oxopentanoate + tRNA(Glu) + NADP(+) = L-glutamyl-tRNA(Glu) + NADPH + H(+). It functions in the pathway porphyrin-containing compound metabolism; protoporphyrin-IX biosynthesis; 5-aminolevulinate from L-glutamyl-tRNA(Glu): step 1/2. Catalyzes the NADPH-dependent reduction of glutamyl-tRNA(Glu) to glutamate 1-semialdehyde (GSA). This chain is Glutamyl-tRNA reductase, found in Shewanella denitrificans (strain OS217 / ATCC BAA-1090 / DSM 15013).